We begin with the raw amino-acid sequence, 316 residues long: ATP synthase gamma chain (316 aa).

This sequence belongs to the ATPase gamma chain family. F-type ATPases have 2 components, CF(1) - the catalytic core - and CF(0) - the membrane proton channel. CF(1) has five subunits: alpha(3), beta(3), gamma(1), delta(1), epsilon(1). CF(0) has three main subunits: a, b and c.

The protein localises to the cellular thylakoid membrane. Functionally, produces ATP from ADP in the presence of a proton gradient across the membrane. The gamma chain is believed to be important in regulating ATPase activity and the flow of protons through the CF(0) complex. This chain is ATP synthase gamma chain, found in Prochlorococcus marinus (strain MIT 9215).